A 446-amino-acid chain; its full sequence is Phosphoglucosamine mutase (446 aa).

Ser99 (phosphoserine intermediate) is an active-site residue. Mg(2+) contacts are provided by Ser99, Asp242, Asp244, and Asp246. The residue at position 99 (Ser99) is a Phosphoserine.

Belongs to the phosphohexose mutase family. Mg(2+) serves as cofactor. In terms of processing, activated by phosphorylation.

The catalysed reaction is alpha-D-glucosamine 1-phosphate = D-glucosamine 6-phosphate. Its function is as follows. Catalyzes the conversion of glucosamine-6-phosphate to glucosamine-1-phosphate. The chain is Phosphoglucosamine mutase from Campylobacter curvus (strain 525.92).